The following is a 1131-amino-acid chain: DNA polymerase II large subunit (1131 aa).

Belongs to the archaeal DNA polymerase II family. As to quaternary structure, heterodimer of a large subunit and a small subunit.

It catalyses the reaction DNA(n) + a 2'-deoxyribonucleoside 5'-triphosphate = DNA(n+1) + diphosphate. The enzyme catalyses Exonucleolytic cleavage in the 3'- to 5'-direction to yield nucleoside 5'-phosphates.. Possesses two activities: a DNA synthesis (polymerase) and an exonucleolytic activity that degrades single-stranded DNA in the 3'- to 5'-direction. Has a template-primer preference which is characteristic of a replicative DNA polymerase. The chain is DNA polymerase II large subunit from Methanococcus maripaludis (strain C7 / ATCC BAA-1331).